Reading from the N-terminus, the 120-residue chain is NAD(P)H-quinone oxidoreductase subunit 3, chloroplastic (120 aa).

3 consecutive transmembrane segments (helical) span residues 11 to 31, 65 to 85, and 89 to 109; these read VVFFIVACLVPILALSGSKLI, FALIFVIFDVETLFLYPWAIV, and LGITAFLETLIFLSILIIGLV.

This sequence belongs to the complex I subunit 3 family. NDH is composed of at least 16 different subunits, 5 of which are encoded in the nucleus.

Its subcellular location is the plastid. It is found in the chloroplast thylakoid membrane. It carries out the reaction a plastoquinone + NADH + (n+1) H(+)(in) = a plastoquinol + NAD(+) + n H(+)(out). The enzyme catalyses a plastoquinone + NADPH + (n+1) H(+)(in) = a plastoquinol + NADP(+) + n H(+)(out). Functionally, NDH shuttles electrons from NAD(P)H:plastoquinone, via FMN and iron-sulfur (Fe-S) centers, to quinones in the photosynthetic chain and possibly in a chloroplast respiratory chain. The immediate electron acceptor for the enzyme in this species is believed to be plastoquinone. Couples the redox reaction to proton translocation, and thus conserves the redox energy in a proton gradient. The chain is NAD(P)H-quinone oxidoreductase subunit 3, chloroplastic from Mesostigma viride (Green alga).